The sequence spans 254 residues: MSLEPQNNLLANINTNSENLPENDVPMSITEHLEELRQRTVFVFIFFLLAATISFTQIKIIVEIFQAPAIGIKFLQLAPGEYFFSSIKIAIYCGIVATTPFGVYQVILYILPGLTNKERKVILPILIGSIVLFIVGGIFAYFVLAPAALNFLISYGADIVEPLWSFEQYFDFILLLLFSTGLAFEIPIIQLLLGISGTVSASQMLLAWRYIIIISTIIGAVLTPSTDPVTQIIMSSAVLALYFSGVIILFLLRK.

8 helical membrane passes run 41–61 (VFVF…IKII), 64–84 (IFQA…EYFF), 91–111 (IYCG…LYIL), 125–145 (ILIG…FVLA), 146–166 (PAAL…LWSF), 172–192 (FILL…IQLL), 204–224 (MLLA…VLTP), and 232–252 (IIMS…LFLL).

The protein belongs to the TatC family.

It is found in the plastid. The protein localises to the chloroplast membrane. This is an uncharacterized protein from Porphyra purpurea (Red seaweed).